Here is a 250-residue protein sequence, read N- to C-terminus: Ubiquinone/menaquinone biosynthesis C-methyltransferase UbiE (250 aa).

Residues Ser73, Asp94, and 122–123 contribute to the S-adenosyl-L-methionine site; that span reads NA.

The protein belongs to the class I-like SAM-binding methyltransferase superfamily. MenG/UbiE family.

The enzyme catalyses a 2-demethylmenaquinol + S-adenosyl-L-methionine = a menaquinol + S-adenosyl-L-homocysteine + H(+). The catalysed reaction is a 2-methoxy-6-(all-trans-polyprenyl)benzene-1,4-diol + S-adenosyl-L-methionine = a 5-methoxy-2-methyl-3-(all-trans-polyprenyl)benzene-1,4-diol + S-adenosyl-L-homocysteine + H(+). It functions in the pathway quinol/quinone metabolism; menaquinone biosynthesis; menaquinol from 1,4-dihydroxy-2-naphthoate: step 2/2. Its pathway is cofactor biosynthesis; ubiquinone biosynthesis. Methyltransferase required for the conversion of demethylmenaquinol (DMKH2) to menaquinol (MKH2) and the conversion of 2-polyprenyl-6-methoxy-1,4-benzoquinol (DDMQH2) to 2-polyprenyl-3-methyl-6-methoxy-1,4-benzoquinol (DMQH2). This Legionella pneumophila (strain Lens) protein is Ubiquinone/menaquinone biosynthesis C-methyltransferase UbiE.